A 300-amino-acid chain; its full sequence is Lysophosphatidic acid:oleoyl-CoA acyltransferase 1 (300 aa).

The helical transmembrane segment at 33–53 (LLGILGVKTIIMLPLIMLYLL) threads the bilayer. The short motif at 101–106 (CTSPLD) is the HXXXXD motif element.

It belongs to the 1-acyl-sn-glycerol-3-phosphate acyltransferase family.

The protein localises to the lipid droplet. It localises to the endoplasmic reticulum membrane. It carries out the reaction a 1-acyl-sn-glycero-3-phosphate + an acyl-CoA = a 1,2-diacyl-sn-glycero-3-phosphate + CoA. The enzyme catalyses 1-hexadecanoyl-sn-glycero-3-phosphate + (9Z)-octadecenoyl-CoA = 1-hexadecanoyl-2-(9Z-octadecenoyl)-sn-glycero-3-phosphate + CoA. Its function is as follows. Acyl-CoA-dependent lysophosphatidic acid acyltransferase with preference for oleoyl-CoA. Involved in triacylglyceride homeostasis and lipid droplet formation. Involved in vacuolar protein sorting. This Saccharomyces cerevisiae (strain ATCC 204508 / S288c) (Baker's yeast) protein is Lysophosphatidic acid:oleoyl-CoA acyltransferase 1.